Here is a 460-residue protein sequence, read N- to C-terminus: Beta-1,3-xylanase TXYA (460 aa).

The first 22 residues, 1–22, serve as a signal peptide directing secretion; it reads MKKLAKMISVATLGACAFQAHA. The GH26 domain occupies 23–337; it reads LDGKLVPDQG…LSDPKFIRHS (315 aa). Glu-138 acts as the Proton donor in catalysis. Glu-234 acts as the Nucleophile in catalysis. The tract at residues 347 to 371 is disordered; sequence GNSDGGNGGDNGGDNGGDNGGETPE. Positions 348 to 366 are enriched in gly residues; that stretch reads NSDGGNGGDNGGDNGGDNG. Positions 368 to 460 are carbohydrate binding module (CBM); it reads ETPENCTDDF…TVTFTNQVCN (93 aa). 2 disulfide bridges follow: Cys-373/Cys-459 and Cys-404/Cys-409.

This sequence belongs to the glycosyl hydrolase 26 family.

The enzyme catalyses Random hydrolysis of (1-&gt;3)-beta-D-glycosidic linkages in (1-&gt;3)-beta-D-xylans.. Its activity is regulated as follows. Completely inhibited by Cu(2+), Hg(2+) and N-bromosuccinimide. Strongly inhibited by Ag(+), Zn(2+) and Pb(2+). Moderately inhibited by Fe(3+), Al(3+), Mn(2+), dithiothreitol and p-chloromercuribenzoic acid. Slightly activated by Mg(2+) and Ca(2+). Unaffected by Na(+), K(+), Ba(2+), EDTA, iodoacetic acid and N-ethylmalaimide. Its function is as follows. Catalyzes the hydrolysis of beta-1,3-xylan into oligosaccharides, mainly xylotriose and xylobiose with smaller amounts of xylotetraose, xylose, xylopentaose and xylohexaose. Weakly active toward beta-1,3-xylotriose, yielding xylose and xylobiose. Converts beta-1,3-xylotetraose into xylotriose, xylobiose and xylose. Converts beta-1,3-xylopentaose into xylotetraose, xylotriose, xylobiose and xylose. Does not hydrolyze xylobiose, p-nitrophenyl-beta-xyloside, beta-1,4-xylan, curdlan or carboxymethylcellulose. This Vibrio sp protein is Beta-1,3-xylanase TXYA.